Consider the following 462-residue polypeptide: Toxin CqTX-A (462 aa).

The first 19 residues, 1 to 19, serve as a signal peptide directing secretion; it reads MANMLYFSLLALLFMTGIA. N-linked (GlcNAc...) asparagine glycosylation is present at Asn-174.

Belongs to the jellyfish toxin family. Type I subfamily. Post-translationally, contains disulfide bonds. N-glycosylated.

It localises to the secreted. The protein resides in the nematocyst. The protein localises to the target cell membrane. Functionally, critical allergen and main toxic protein of C.quadrigatus venom. Has potent hemolytic activity. Is lethal to crayfish. Causes cutaneous inflammation in humans. May act as a pore-forming toxin, disrupting normal transmembrane ion concentration gradients in susceptible cells. The polypeptide is Toxin CqTX-A (Chiropsoides quadrigatus (Box jellyfish)).